Here is a 182-residue protein sequence, read N- to C-terminus: Adenylate kinase (182 aa).

12–17 is an ATP binding site; sequence GAGKGT. Residues 32–61 form an NMP region; it reads STGDLLREEVSGGTDLGKKAELIMNKGELV. Residues T33, R38, 59–61, 85–88, and Q92 each bind AMP; these read ELV and GFPR. Positions 126 to 132 are LID; sequence GRGRKDD. R127 serves as a coordination point for ATP. 2 residues coordinate AMP: R129 and R140. Residue G168 coordinates ATP.

Belongs to the adenylate kinase family. In terms of assembly, monomer.

It localises to the cytoplasm. The catalysed reaction is AMP + ATP = 2 ADP. Its pathway is purine metabolism; AMP biosynthesis via salvage pathway; AMP from ADP: step 1/1. Catalyzes the reversible transfer of the terminal phosphate group between ATP and AMP. Plays an important role in cellular energy homeostasis and in adenine nucleotide metabolism. The protein is Adenylate kinase of Prochlorococcus marinus (strain SARG / CCMP1375 / SS120).